Reading from the N-terminus, the 219-residue chain is MLLTSLLQVFACCLVLPAQVTAFYYYTSGAERKCFHKELSKGTLFQATYKAQIYDDQLQNYRDAGAQDFGVLIDIEETFDDNHLVVHQKGSASGDLTFLASDSGEHKICIQPEAGGWLIKAKTKIDVEFQVGSDEKLDSKGKATIDILHAKVNVLNSKIGEIRREQKLMRDREATFRDASEAVNSRAMWWIVIQLIVLAVTCGWQMKHLGKFFVKQKIL.

An N-terminal signal peptide occupies residues 1–22 (MLLTSLLQVFACCLVLPAQVTA). Residues 23-186 (FYYYTSGAER…RDASEAVNSR (164 aa)) lie on the Lumenal side of the membrane. The 100-residue stretch at 32–131 (RKCFHKELSK…KTKIDVEFQV (100 aa)) folds into the GOLD domain. A helical transmembrane segment spans residues 187-207 (AMWWIVIQLIVLAVTCGWQMK). The Cytoplasmic segment spans residues 208–219 (HLGKFFVKQKIL).

It belongs to the EMP24/GP25L family. Associates with EMP24, ERV25 and ERP2.

Its subcellular location is the endoplasmic reticulum membrane. In terms of biological role, involved in vesicular protein trafficking. This chain is Protein ERP1 (ERP1), found in Saccharomyces cerevisiae (strain ATCC 204508 / S288c) (Baker's yeast).